A 1091-amino-acid chain; its full sequence is LRR receptor-like serine/threonine-protein kinase RGI3 (1091 aa).

An N-terminal signal peptide occupies residues 1 to 24 (MPPNIYRLSFFSSLLCFFFIPCFS). At 25 to 703 (LDQQGQALLS…TTRNSSVVRL (679 aa)) the chain is on the extracellular side. An LRR 1 repeat occupies 33-56 (LSWKSQLNISGDAFSSWHVADTSP). The N-linked (GlcNAc...) asparagine glycan is linked to N40. C57 and C64 are joined by a disulfide. LRR repeat units lie at residues 67 to 91 (RGEV…SLRS), 92 to 115 (LKSL…EIGD), 116 to 140 (FTEL…IFRL), 142 to 166 (KLKT…NLSG), 168 to 188 (VELM…IGEL), 190 to 213 (NLQV…IGNC), 214 to 237 (ENLV…IGNL), 239 to 261 (RVQT…IGYC), 262 to 285 (TELQ…IGGL), 287 to 309 (KLQS…LGNC), 311 to 332 (ELWL…SFGK), 333 to 357 (LENL…LTNC), 359 to 383 (KLTH…NLRS), 385 to 405 (TMFF…LSQC), 406 to 429 (RELQ…IFGL), 431 to 453 (NLTK…IGNC), 454 to 477 (TNLY…IGNL), 478 to 501 (KNLN…ISGC), 503 to 524 (SLEF…TTLP), 525 to 548 (KSLK…IGLL), 549 to 572 (TELT…ISTC), 574 to 596 (SLQL…LGQI), 598 to 620 (SLAI…RFSD), 621 to 644 (LKNL…LTDL), 645 to 668 (QNLV…PFFR), and 669 to 690 (RLPL…ISTR). An N-linked (GlcNAc...) asparagine glycan is attached at N104. The N-linked (GlcNAc...) asparagine glycan is linked to N163. Short sequence motifs (small peptide recognition) lie at residues 173–174 (FD), 195–198 (RAGG), 218–223 (MLGLAE), Y246, and 268–270 (YLY). Short sequence motifs (small peptide recognition) lie at residues 316–319 (DFSE) and 338–340 (ELQ). N356 carries N-linked (GlcNAc...) asparagine glycosylation. 2 short sequence motifs (small peptide recognition) span residues 386–390 (MFFAW) and 412–415 (DLSY). N431 carries an N-linked (GlcNAc...) asparagine glycan. The short motif at 434–438 (KLLLL) is the Small peptide recognition element. N452 carries N-linked (GlcNAc...) asparagine glycosylation. Residues 458-460 (RLR) carry the Small peptide recognition motif. N-linked (GlcNAc...) asparagine glycosylation is present at N604. An N-linked (GlcNAc...) asparagine glycan is attached at N651. N697 carries an N-linked (GlcNAc...) asparagine glycan. Residues 704-724 (TILILVVVTAVLVLMAVYTLV) form a helical membrane-spanning segment. The Cytoplasmic segment spans residues 725-1091 (RARAAGKQLL…CSFAFSDDSV (367 aa)). Residues 760–1046 (LTSANVIGTG…MLTEIRHIDV (287 aa)) form the Protein kinase domain. ATP-binding positions include 766 to 774 (IGTGSSGVV) and K788. 2 positions are modified to phosphotyrosine: Y831 and Y870. D883 acts as the Proton acceptor in catalysis. A Phosphotyrosine modification is found at Y933.

Belongs to the protein kinase superfamily. Ser/Thr protein kinase family. In terms of assembly, binds to RGF peptides such as RGF1, GLV5/CLEL1/RGF2, GLV7/CLEL3/RGF3, GLV3/RGF4, GLV10/CLEL7/RGF5 and RGF10/CLELN; these interactions trigger the formation of heterodimers with SERK1, SERK2 or BAK1/SERK3 via LRR regions. Post-translationally, phosphorylated and ubiquitinated upon interaction with RGF1, thus leading to activation a subsequent degradation. In terms of processing, autophosphorylated. As to expression, expressed in roots.

Its subcellular location is the cell membrane. It carries out the reaction L-seryl-[protein] + ATP = O-phospho-L-seryl-[protein] + ADP + H(+). It catalyses the reaction L-threonyl-[protein] + ATP = O-phospho-L-threonyl-[protein] + ADP + H(+). Functionally, together with RGI1, RGI2, RGI4 and RGI5, acts as a receptor of RGF peptides (e.g. RGF1, GLV5/CLEL1/RGF2, GLV7/CLEL3/RGF3, GLV3/RGF4, GLV10/CLEL7/RGF5 and RGF10/CLELN), peptide hormones which maintain the postembryonic root stem cell niche by regulating the expression levels and patterns of the transcription factor PLETHORA (PLT, e.g. PLT1 and PLT2). Links RGF peptides signal with their downstream components. The polypeptide is LRR receptor-like serine/threonine-protein kinase RGI3 (Arabidopsis thaliana (Mouse-ear cress)).